The primary structure comprises 559 residues: CTP synthase (559 aa).

Positions 1–283 (MSTSRTTTNN…DTFLIRRLDL (283 aa)) are amidoligase domain. Residue Ser25 coordinates CTP. Residue Ser25 participates in UTP binding. ATP is bound by residues 26 to 31 (SLGKGL) and Asp83. 2 residues coordinate Mg(2+): Asp83 and Glu157. CTP is bound by residues 164–166 (DIE), 204–209 (KTKPTQ), and Lys240. Residues 204-209 (KTKPTQ) and Lys240 each bind UTP. The region spanning 308 to 557 (TVGIVGKYVD…VAAALAAAVT (250 aa)) is the Glutamine amidotransferase type-1 domain. Gly371 contacts L-glutamine. Cys398 serves as the catalytic Nucleophile; for glutamine hydrolysis. L-glutamine contacts are provided by residues 399–402 (LGLQ), Glu421, and Arg482. Catalysis depends on residues His530 and Glu532.

The protein belongs to the CTP synthase family. In terms of assembly, homotetramer.

It carries out the reaction UTP + L-glutamine + ATP + H2O = CTP + L-glutamate + ADP + phosphate + 2 H(+). It catalyses the reaction L-glutamine + H2O = L-glutamate + NH4(+). The enzyme catalyses UTP + NH4(+) + ATP = CTP + ADP + phosphate + 2 H(+). Its pathway is pyrimidine metabolism; CTP biosynthesis via de novo pathway; CTP from UDP: step 2/2. With respect to regulation, allosterically activated by GTP, when glutamine is the substrate; GTP has no effect on the reaction when ammonia is the substrate. The allosteric effector GTP functions by stabilizing the protein conformation that binds the tetrahedral intermediate(s) formed during glutamine hydrolysis. Inhibited by the product CTP, via allosteric rather than competitive inhibition. Its function is as follows. Catalyzes the ATP-dependent amination of UTP to CTP with either L-glutamine or ammonia as the source of nitrogen. Regulates intracellular CTP levels through interactions with the four ribonucleotide triphosphates. In Corynebacterium efficiens (strain DSM 44549 / YS-314 / AJ 12310 / JCM 11189 / NBRC 100395), this protein is CTP synthase.